The chain runs to 215 residues: RxLR effector protein PITG_00582 (215 aa).

An N-terminal signal peptide occupies residues 1–19; that stretch reads MLPYKTLLLALGFFFTVQC. Residues 39-51 carry the RxLR-dEER motif; sequence RLLRSPEKTDEER. A coiled-coil region spans residues 81-149; that stretch reads VAKQAKEMSN…QNELEKLAKQ (69 aa).

It belongs to the RxLR effector family.

Its subcellular location is the secreted. It localises to the host cell membrane. Its function is as follows. Effector that might be involved in host plant infection. This chain is RxLR effector protein PITG_00582, found in Phytophthora infestans (strain T30-4) (Potato late blight agent).